Consider the following 172-residue polypeptide: Peptide deformylase (172 aa).

Residues Cys-91 and His-133 each coordinate Fe cation. Glu-134 is a catalytic residue. His-137 contacts Fe cation.

This sequence belongs to the polypeptide deformylase family. Requires Fe(2+) as cofactor.

The enzyme catalyses N-terminal N-formyl-L-methionyl-[peptide] + H2O = N-terminal L-methionyl-[peptide] + formate. Functionally, removes the formyl group from the N-terminal Met of newly synthesized proteins. Requires at least a dipeptide for an efficient rate of reaction. N-terminal L-methionine is a prerequisite for activity but the enzyme has broad specificity at other positions. The protein is Peptide deformylase of Vibrio campbellii (strain ATCC BAA-1116).